The chain runs to 191 residues: Fe/S biogenesis protein NfuA (191 aa).

Positions 149 and 152 each coordinate [4Fe-4S] cluster.

It belongs to the NfuA family. As to quaternary structure, homodimer. It depends on [4Fe-4S] cluster as a cofactor.

Its function is as follows. Involved in iron-sulfur cluster biogenesis. Binds a 4Fe-4S cluster, can transfer this cluster to apoproteins, and thereby intervenes in the maturation of Fe/S proteins. Could also act as a scaffold/chaperone for damaged Fe/S proteins. This chain is Fe/S biogenesis protein NfuA, found in Escherichia coli O139:H28 (strain E24377A / ETEC).